Here is a 277-residue protein sequence, read N- to C-terminus: 3-methyl-2-oxobutanoate hydroxymethyltransferase (277 aa).

Mg(2+) contacts are provided by Asp-43 and Asp-82. 3-methyl-2-oxobutanoate contacts are provided by residues 43–44 (DS), Asp-82, and Lys-112. Position 114 (Glu-114) interacts with Mg(2+). Residue Glu-181 is the Proton acceptor of the active site.

This sequence belongs to the PanB family. Homodecamer; pentamer of dimers. It depends on Mg(2+) as a cofactor.

Its subcellular location is the cytoplasm. It catalyses the reaction 3-methyl-2-oxobutanoate + (6R)-5,10-methylene-5,6,7,8-tetrahydrofolate + H2O = 2-dehydropantoate + (6S)-5,6,7,8-tetrahydrofolate. It participates in cofactor biosynthesis; (R)-pantothenate biosynthesis; (R)-pantoate from 3-methyl-2-oxobutanoate: step 1/2. In terms of biological role, catalyzes the reversible reaction in which hydroxymethyl group from 5,10-methylenetetrahydrofolate is transferred onto alpha-ketoisovalerate to form ketopantoate. This chain is 3-methyl-2-oxobutanoate hydroxymethyltransferase, found in Listeria innocua serovar 6a (strain ATCC BAA-680 / CLIP 11262).